A 344-amino-acid polypeptide reads, in one-letter code: L-rhamnose-proton symporter (344 aa).

A run of 10 helical transmembrane segments spans residues 4–24, 38–58, 68–88, 101–121, 137–157, 175–195, 214–234, 259–279, 290–310, and 323–343; these read AITMGIFWHLIGAASAACFYA, WSVGGIVSWIILPWAISALLL, FSLSTLLPVFLFGAMWGIGNI, MGIGIAIGITLIVGTLMTPII, TLLGVLVALIGVGIVTRAGQL, LVLAVMCGIFSAGMSFAMNAA, LPSYVVIMGGGAIINLGFCFI, VLLSALGGLMWYLQFFFYAWG, ISWMLHMSFYVLCGGIVGLVL, and VLSLGCVVIIVAANIVGIGMA.

Belongs to the L-rhamnose transporter (TC 2.A.7.6) family.

It localises to the cell inner membrane. The enzyme catalyses L-rhamnopyranose(in) + H(+)(in) = L-rhamnopyranose(out) + H(+)(out). Uptake of L-rhamnose across the cytoplasmic membrane with the concomitant transport of protons into the cell (symport system). The protein is L-rhamnose-proton symporter of Shigella dysenteriae serotype 1 (strain Sd197).